A 262-amino-acid polypeptide reads, in one-letter code: Phosphatidylserine decarboxylase proenzyme (262 aa).

Catalysis depends on charge relay system; for autoendoproteolytic cleavage activity residues Asp-86, His-142, and Ser-226. The active-site Schiff-base intermediate with substrate; via pyruvic acid; for decarboxylase activity is Ser-226. Ser-226 is subject to Pyruvic acid (Ser); by autocatalysis.

It belongs to the phosphatidylserine decarboxylase family. PSD-B subfamily. Prokaryotic type I sub-subfamily. As to quaternary structure, heterodimer of a large membrane-associated beta subunit and a small pyruvoyl-containing alpha subunit. The cofactor is pyruvate. Post-translationally, is synthesized initially as an inactive proenzyme. Formation of the active enzyme involves a self-maturation process in which the active site pyruvoyl group is generated from an internal serine residue via an autocatalytic post-translational modification. Two non-identical subunits are generated from the proenzyme in this reaction, and the pyruvate is formed at the N-terminus of the alpha chain, which is derived from the carboxyl end of the proenzyme. The autoendoproteolytic cleavage occurs by a canonical serine protease mechanism, in which the side chain hydroxyl group of the serine supplies its oxygen atom to form the C-terminus of the beta chain, while the remainder of the serine residue undergoes an oxidative deamination to produce ammonia and the pyruvoyl prosthetic group on the alpha chain. During this reaction, the Ser that is part of the protease active site of the proenzyme becomes the pyruvoyl prosthetic group, which constitutes an essential element of the active site of the mature decarboxylase.

It is found in the cell membrane. It catalyses the reaction a 1,2-diacyl-sn-glycero-3-phospho-L-serine + H(+) = a 1,2-diacyl-sn-glycero-3-phosphoethanolamine + CO2. It functions in the pathway phospholipid metabolism; phosphatidylethanolamine biosynthesis; phosphatidylethanolamine from CDP-diacylglycerol: step 2/2. Its function is as follows. Catalyzes the formation of phosphatidylethanolamine (PtdEtn) from phosphatidylserine (PtdSer). The sequence is that of Phosphatidylserine decarboxylase proenzyme from Bacillus thuringiensis (strain Al Hakam).